Here is a 160-residue protein sequence, read N- to C-terminus: Single-stranded DNA-binding protein 3 (160 aa).

Residues 2-104 form the SSB domain; the sequence is MNRVVLVGRL…IVAESVQFLE (103 aa). Over residues 106–133 the composition is skewed to polar residues; the sequence is KQNGAGGSTSNNNQSETNYSNDNKTSSY. The interval 106–160 is disordered; the sequence is KQNGAGGSTSNNNQSETNYSNDNKTSSYRADRSQNGDSFANEGAPVDINPDDLPF.

As to quaternary structure, homotetramer.

The polypeptide is Single-stranded DNA-binding protein 3 (ssb3) (Listeria innocua serovar 6a (strain ATCC BAA-680 / CLIP 11262)).